A 271-amino-acid chain; its full sequence is 4-hydroxy-tetrahydrodipicolinate reductase (271 aa).

Residues 10 to 15 (GAGGRM), Glu36, 100 to 102 (GTT), and 124 to 127 (SGNM) contribute to the NAD(+) site. His157 (proton donor/acceptor) is an active-site residue. Position 158 (His158) interacts with (S)-2,3,4,5-tetrahydrodipicolinate. Catalysis depends on Lys161, which acts as the Proton donor. (S)-2,3,4,5-tetrahydrodipicolinate is bound at residue 167–168 (GT).

It belongs to the DapB family.

It localises to the cytoplasm. The enzyme catalyses (S)-2,3,4,5-tetrahydrodipicolinate + NAD(+) + H2O = (2S,4S)-4-hydroxy-2,3,4,5-tetrahydrodipicolinate + NADH + H(+). It catalyses the reaction (S)-2,3,4,5-tetrahydrodipicolinate + NADP(+) + H2O = (2S,4S)-4-hydroxy-2,3,4,5-tetrahydrodipicolinate + NADPH + H(+). It functions in the pathway amino-acid biosynthesis; L-lysine biosynthesis via DAP pathway; (S)-tetrahydrodipicolinate from L-aspartate: step 4/4. In terms of biological role, catalyzes the conversion of 4-hydroxy-tetrahydrodipicolinate (HTPA) to tetrahydrodipicolinate. The polypeptide is 4-hydroxy-tetrahydrodipicolinate reductase (Rhodopseudomonas palustris (strain BisB18)).